A 251-amino-acid polypeptide reads, in one-letter code: Hydroxyacylglutathione hydrolase (251 aa).

Positions 58, 60, 62, 63, 116, 135, and 173 each coordinate Zn(2+).

Belongs to the metallo-beta-lactamase superfamily. Glyoxalase II family. Monomer. It depends on Zn(2+) as a cofactor.

It carries out the reaction an S-(2-hydroxyacyl)glutathione + H2O = a 2-hydroxy carboxylate + glutathione + H(+). It functions in the pathway secondary metabolite metabolism; methylglyoxal degradation; (R)-lactate from methylglyoxal: step 2/2. Its function is as follows. Thiolesterase that catalyzes the hydrolysis of S-D-lactoyl-glutathione to form glutathione and D-lactic acid. In Bdellovibrio bacteriovorus (strain ATCC 15356 / DSM 50701 / NCIMB 9529 / HD100), this protein is Hydroxyacylglutathione hydrolase.